The sequence spans 22 residues: FIGSALKVLAGVLPSIVSWVKQ.

At Q22 the chain carries Glutamine amide.

Expressed by the skin dorsal glands.

It localises to the secreted. The sequence is that of Melittin-like peptide from Rana temporaria (European common frog).